The following is a 286-amino-acid chain: Bifunctional protein FolD (286 aa).

NADP(+) contacts are provided by residues 166–168 (GAS) and Ile232.

Belongs to the tetrahydrofolate dehydrogenase/cyclohydrolase family. As to quaternary structure, homodimer.

It catalyses the reaction (6R)-5,10-methylene-5,6,7,8-tetrahydrofolate + NADP(+) = (6R)-5,10-methenyltetrahydrofolate + NADPH. The enzyme catalyses (6R)-5,10-methenyltetrahydrofolate + H2O = (6R)-10-formyltetrahydrofolate + H(+). It participates in one-carbon metabolism; tetrahydrofolate interconversion. Its function is as follows. Catalyzes the oxidation of 5,10-methylenetetrahydrofolate to 5,10-methenyltetrahydrofolate and then the hydrolysis of 5,10-methenyltetrahydrofolate to 10-formyltetrahydrofolate. The protein is Bifunctional protein FolD of Vibrio campbellii (strain ATCC BAA-1116).